The following is a 480-amino-acid chain: tRNA-2-methylthio-N(6)-dimethylallyladenosine synthase (480 aa).

The 119-residue stretch at Lys43–Asp161 folds into the MTTase N-terminal domain. [4Fe-4S] cluster contacts are provided by Cys52, Cys88, Cys122, Cys198, Cys202, and Cys205. In terms of domain architecture, Radical SAM core spans Arg184–Glu414. Residues Asp417–Arg480 enclose the TRAM domain.

It belongs to the methylthiotransferase family. MiaB subfamily. In terms of assembly, monomer. The cofactor is [4Fe-4S] cluster.

Its subcellular location is the cytoplasm. It carries out the reaction N(6)-dimethylallyladenosine(37) in tRNA + (sulfur carrier)-SH + AH2 + 2 S-adenosyl-L-methionine = 2-methylsulfanyl-N(6)-dimethylallyladenosine(37) in tRNA + (sulfur carrier)-H + 5'-deoxyadenosine + L-methionine + A + S-adenosyl-L-homocysteine + 2 H(+). Functionally, catalyzes the methylthiolation of N6-(dimethylallyl)adenosine (i(6)A), leading to the formation of 2-methylthio-N6-(dimethylallyl)adenosine (ms(2)i(6)A) at position 37 in tRNAs that read codons beginning with uridine. In Acetivibrio thermocellus (strain ATCC 27405 / DSM 1237 / JCM 9322 / NBRC 103400 / NCIMB 10682 / NRRL B-4536 / VPI 7372) (Clostridium thermocellum), this protein is tRNA-2-methylthio-N(6)-dimethylallyladenosine synthase.